The primary structure comprises 94 residues: MRNYEALIVFNMKGTETPVEELISTVAAAMKEEGADITATENAGRREFAYESNHLSAGQYVTYTFSAEPSAIRPIRERLRLNPQIHLQYYKVLG.

This sequence belongs to the bacterial ribosomal protein bS6 family.

Functionally, binds together with bS18 to 16S ribosomal RNA. In Akkermansia muciniphila (strain ATCC BAA-835 / DSM 22959 / JCM 33894 / BCRC 81048 / CCUG 64013 / CIP 107961 / Muc), this protein is Small ribosomal subunit protein bS6.